A 350-amino-acid chain; its full sequence is MTLNKVYYSGGEEIRDLTIVGGGPTGIFAAFQCGMNNITSRIIESMPQLGGQLAALYPEKHIYDVAGFHEVPAAGLVDSLWKQAERYHPEINLGEAVTRYRKLDDGSFETTTKSGKVFLSRALLLAAGLGAFTPRTLPQLGCVDHLEGRSIFYAVKNIRDFAGKKVVIVGGGDSALDWAVGLLDAAEHVTLVHRMHEFQGHGKTAREVDEARDKGVIDVYMDTEVTAIETAEGGMKNVTLLRKNGASVVLEADRLLILIGFRSNLGPLAEWDLELVDNALVVDSHMKTSVDGLYAAGDIAWYPGKLKIIQTGLSDAAMAVRHSLNYIRPGEKIRHTFSSVKMAKQKKNEQ.

FAD is bound by residues Thr25, Glu44, Gln52, Tyr57, Val97, Phe132, Asp298, and Ser339.

This sequence belongs to the ferredoxin--NADP reductase type 2 family. In terms of assembly, homodimer. The cofactor is FAD.

The catalysed reaction is 2 reduced [2Fe-2S]-[ferredoxin] + NADP(+) + H(+) = 2 oxidized [2Fe-2S]-[ferredoxin] + NADPH. This is Ferredoxin--NADP reductase from Chlorobium limicola (strain DSM 245 / NBRC 103803 / 6330).